Here is a 270-residue protein sequence, read N- to C-terminus: Diaminopimelate epimerase (270 aa).

Substrate-binding residues include Asn15, Gln49, and Asn66. Cys75 functions as the Proton donor in the catalytic mechanism. Residues 76–77 (GN), Asn155, Asn187, and 204–205 (ER) contribute to the substrate site. Catalysis depends on Cys213, which acts as the Proton acceptor. A substrate-binding site is contributed by 214-215 (GS).

This sequence belongs to the diaminopimelate epimerase family. As to quaternary structure, homodimer.

The protein localises to the cytoplasm. The enzyme catalyses (2S,6S)-2,6-diaminopimelate = meso-2,6-diaminopimelate. Its pathway is amino-acid biosynthesis; L-lysine biosynthesis via DAP pathway; DL-2,6-diaminopimelate from LL-2,6-diaminopimelate: step 1/1. In terms of biological role, catalyzes the stereoinversion of LL-2,6-diaminopimelate (L,L-DAP) to meso-diaminopimelate (meso-DAP), a precursor of L-lysine and an essential component of the bacterial peptidoglycan. This Rickettsia felis (strain ATCC VR-1525 / URRWXCal2) (Rickettsia azadi) protein is Diaminopimelate epimerase.